A 239-amino-acid chain; its full sequence is Small ribosomal subunit protein eS6A (239 aa).

Phosphoserine occurs at positions 235 and 236.

It belongs to the eukaryotic ribosomal protein eS6 family. Component of the small ribosomal subunit (SSU). Mature yeast ribosomes consist of a small (40S) and a large (60S) subunit. The 40S small subunit contains 1 molecule of ribosomal RNA (18S rRNA) and at least 33 different proteins. The large 60S subunit contains 3 rRNA molecules (25S, 5.8S and 5S rRNA) and at least 46 different proteins. Interacts with snoRNA U3. uS11 interacts with MPP10. Component of the ribosomal small subunit (SSU) processome composed of at least 40 protein subunits and snoRNA U3. In terms of processing, phosphorylated.

It is found in the cytoplasm. Functionally, component of the ribosome, a large ribonucleoprotein complex responsible for the synthesis of proteins in the cell. The small ribosomal subunit (SSU) binds messenger RNAs (mRNAs) and translates the encoded message by selecting cognate aminoacyl-transfer RNA (tRNA) molecules. The large subunit (LSU) contains the ribosomal catalytic site termed the peptidyl transferase center (PTC), which catalyzes the formation of peptide bonds, thereby polymerizing the amino acids delivered by tRNAs into a polypeptide chain. The nascent polypeptides leave the ribosome through a tunnel in the LSU and interact with protein factors that function in enzymatic processing, targeting, and the membrane insertion of nascent chains at the exit of the ribosomal tunnel. eS6 is involved in nucleolar processing of pre-18S ribosomal RNA and ribosome assembly. The chain is Small ribosomal subunit protein eS6A (rps601) from Schizosaccharomyces pombe (strain 972 / ATCC 24843) (Fission yeast).